The primary structure comprises 141 residues: Putative antiporter subunit mnhB2 (141 aa).

A run of 4 helical transmembrane segments spans residues 10–30 (TVTK…FFAG), 35–55 (GGGF…FLAF), 70–90 (ILMI…MFFG), and 114–134 (ITLF…TVML).

It belongs to the CPA3 antiporters (TC 2.A.63) subunit B family. May form a heterooligomeric complex that consists of seven subunits: mnhA2, mnhB2, mnhC2, mnhD2, mnhE2, mnhF2 and mnhG2.

The protein localises to the cell membrane. This chain is Putative antiporter subunit mnhB2 (mnhB2), found in Staphylococcus aureus (strain Mu3 / ATCC 700698).